Consider the following 634-residue polypeptide: Chaperone protein HtpG (634 aa).

The interval 1–345 is a; substrate-binding; sequence MEHQQNHTFS…SNDLPLNVSR (345 aa). The tract at residues 346-562 is b; sequence EILQDTRVTA…NDDMSTQMAK (217 aa). Residues 563–634 form a c region; that stretch reads LMAQMGQPVP…VGRINKLLLA (72 aa).

The protein belongs to the heat shock protein 90 family. Homodimer.

The protein localises to the cytoplasm. Molecular chaperone. Has ATPase activity. The chain is Chaperone protein HtpG from Psychromonas ingrahamii (strain DSM 17664 / CCUG 51855 / 37).